Here is a 264-residue protein sequence, read N- to C-terminus: Phycocyanobilin:ferredoxin oxidoreductase (264 aa).

It belongs to the HY2 family.

The catalysed reaction is (2R,3Z)-phycocyanobilin + 4 oxidized [2Fe-2S]-[ferredoxin] = biliverdin IXalpha + 4 reduced [2Fe-2S]-[ferredoxin] + 4 H(+). Its function is as follows. Catalyzes the four-electron reduction of biliverdin IX-alpha (2-electron reduction at both the A and D rings); the reaction proceeds via an isolatable 2-electron intermediate, 181,182-dihydrobiliverdin. The chain is Phycocyanobilin:ferredoxin oxidoreductase (pcyA) from Prochlorococcus marinus (strain MIT 9313).